We begin with the raw amino-acid sequence, 424 residues long: Dihydroorotase (424 aa).

Zn(2+) is bound by residues His-61 and His-63. Residues 63–65 (HLR) and Asn-95 contribute to the substrate site. Residues Asp-153, His-180, and His-233 each coordinate Zn(2+). Position 279 (Asn-279) interacts with substrate. Asp-306 provides a ligand contact to Zn(2+). Residue Asp-306 is part of the active site. His-310 is a substrate binding site.

This sequence belongs to the metallo-dependent hydrolases superfamily. DHOase family. Class I DHOase subfamily. Zn(2+) is required as a cofactor.

It catalyses the reaction (S)-dihydroorotate + H2O = N-carbamoyl-L-aspartate + H(+). The protein operates within pyrimidine metabolism; UMP biosynthesis via de novo pathway; (S)-dihydroorotate from bicarbonate: step 3/3. Catalyzes the reversible cyclization of carbamoyl aspartate to dihydroorotate. The protein is Dihydroorotase of Geobacter metallireducens (strain ATCC 53774 / DSM 7210 / GS-15).